The sequence spans 231 residues: 7-cyano-7-deazaguanine synthase (231 aa).

8–18 (FSGGQDSTTCL) contacts ATP. Zn(2+)-binding residues include cysteine 188, cysteine 197, cysteine 200, and cysteine 203.

It belongs to the QueC family. Requires Zn(2+) as cofactor.

The enzyme catalyses 7-carboxy-7-deazaguanine + NH4(+) + ATP = 7-cyano-7-deazaguanine + ADP + phosphate + H2O + H(+). The protein operates within purine metabolism; 7-cyano-7-deazaguanine biosynthesis. Functionally, catalyzes the ATP-dependent conversion of 7-carboxy-7-deazaguanine (CDG) to 7-cyano-7-deazaguanine (preQ(0)). The protein is 7-cyano-7-deazaguanine synthase of Escherichia coli (strain SE11).